The primary structure comprises 384 residues: Carbamoyl phosphate synthase small chain (384 aa).

The interval 1 to 192 (MIKKIPAILV…LADRNREKIY (192 aa)) is CPSase. The L-glutamine site is built by Ser-51, Gly-244, and Gly-246. The 187-residue stretch at 196–382 (KVIVIDFGVK…IEIMKQFRKE (187 aa)) folds into the Glutamine amidotransferase type-1 domain. Cys-272 acts as the Nucleophile in catalysis. The L-glutamine site is built by Met-273, Gln-276, Asn-312, Gly-314, and Phe-315. Active-site residues include His-355 and Glu-357.

The protein belongs to the CarA family. Composed of two chains; the small (or glutamine) chain promotes the hydrolysis of glutamine to ammonia, which is used by the large (or ammonia) chain to synthesize carbamoyl phosphate. Tetramer of heterodimers (alpha,beta)4.

The protein resides in the plastid. It is found in the chloroplast. The enzyme catalyses hydrogencarbonate + L-glutamine + 2 ATP + H2O = carbamoyl phosphate + L-glutamate + 2 ADP + phosphate + 2 H(+). It catalyses the reaction L-glutamine + H2O = L-glutamate + NH4(+). Its pathway is amino-acid biosynthesis; L-arginine biosynthesis; carbamoyl phosphate from bicarbonate: step 1/1. The protein operates within pyrimidine metabolism; UMP biosynthesis via de novo pathway; (S)-dihydroorotate from bicarbonate: step 1/3. Its function is as follows. Small subunit of the glutamine-dependent carbamoyl phosphate synthetase (CPSase). CPSase catalyzes the formation of carbamoyl phosphate from the ammonia moiety of glutamine, carbonate, and phosphate donated by ATP, constituting the first step of 2 biosynthetic pathways, one leading to arginine and/or urea and the other to pyrimidine nucleotides. The small subunit (glutamine amidotransferase) binds and cleaves glutamine to supply the large subunit with the substrate ammonia. The polypeptide is Carbamoyl phosphate synthase small chain (Porphyra purpurea (Red seaweed)).